We begin with the raw amino-acid sequence, 45 residues long: Bacteriocin fulvocin-C (45 aa).

In terms of biological role, bacteriocin. This chain is Bacteriocin fulvocin-C, found in Myxococcus fulvus.